The chain runs to 345 residues: Probable G-protein coupled receptor 139 (345 aa).

Over 1–21 (MEHTHAHLAANSSACGLGFVP) the chain is Extracellular. Residue N11 is glycosylated (N-linked (GlcNAc...) asparagine). A helical transmembrane segment spans residues 22–42 (VVYYSFLLCLGLPANILTVII). The Cytoplasmic portion of the chain corresponds to 43–57 (LSQLVARRQKSSYNY). Residues 58-78 (LLALAAADILVLFFIVFVDFL) traverse the membrane as a helical segment. At 79–94 (LEDFILTMQMPLIPDK) the chain is on the extracellular side. The chain crosses the membrane as a helical span at residues 95–115 (IIEVLEFSSIHTSIWITVPLT). Topologically, residues 116 to 140 (VDRYIAVCHPLKYHTVSYPARTRKV) are cytoplasmic. Residues 141-161 (ILSVYITCFLTSIPYYWWPNI) form a helical membrane-spanning segment. Residues 162–173 (WTEDYISTSMHH) are Extracellular-facing. The helical transmembrane segment at 174–194 (VLVWIHCFTVYLVPCSIFFIL) threads the bilayer. The Cytoplasmic segment spans residues 195 to 220 (NSIIVYKLRRKSNFRLRGYSTGKTTA). A helical transmembrane segment spans residues 221–241 (ILFTITSIFATLWAPRIIMIL). At 242 to 260 (YHLYGAPIQNPWLVHIMLD) the chain is on the extracellular side. Residues 261 to 281 (VANMLALLNTAINFFLYCFIS) form a helical membrane-spanning segment. Residues 282–345 (KRFRTMAAAT…KHGKPIKVSP (64 aa)) lie on the Cytoplasmic side of the membrane.

Belongs to the G-protein coupled receptor 1 family. In terms of tissue distribution, expressed almost exclusively in the brain. Abundantly expressed in the ventrolateral region of caudate putamen, the habenular nucleus, the zona incerta, and the medial mammillary nucleus.

It is found in the cell membrane. Functionally, orphan receptor. Seems to act through a G(q/11)-mediated pathway. The polypeptide is Probable G-protein coupled receptor 139 (Gpr139) (Mus musculus (Mouse)).